The following is a 95-amino-acid chain: Aspartyl/glutamyl-tRNA(Asn/Gln) amidotransferase subunit C (95 aa).

The protein belongs to the GatC family. Heterotrimer of A, B and C subunits.

The catalysed reaction is L-glutamyl-tRNA(Gln) + L-glutamine + ATP + H2O = L-glutaminyl-tRNA(Gln) + L-glutamate + ADP + phosphate + H(+). The enzyme catalyses L-aspartyl-tRNA(Asn) + L-glutamine + ATP + H2O = L-asparaginyl-tRNA(Asn) + L-glutamate + ADP + phosphate + 2 H(+). Its function is as follows. Allows the formation of correctly charged Asn-tRNA(Asn) or Gln-tRNA(Gln) through the transamidation of misacylated Asp-tRNA(Asn) or Glu-tRNA(Gln) in organisms which lack either or both of asparaginyl-tRNA or glutaminyl-tRNA synthetases. The reaction takes place in the presence of glutamine and ATP through an activated phospho-Asp-tRNA(Asn) or phospho-Glu-tRNA(Gln). The protein is Aspartyl/glutamyl-tRNA(Asn/Gln) amidotransferase subunit C of Pseudomonas putida (strain W619).